The chain runs to 284 residues: Bifunctional protein FolD (284 aa).

Residues 165-167 (GRS) and Ser190 each bind NADP(+).

It belongs to the tetrahydrofolate dehydrogenase/cyclohydrolase family. Homodimer.

It catalyses the reaction (6R)-5,10-methylene-5,6,7,8-tetrahydrofolate + NADP(+) = (6R)-5,10-methenyltetrahydrofolate + NADPH. The enzyme catalyses (6R)-5,10-methenyltetrahydrofolate + H2O = (6R)-10-formyltetrahydrofolate + H(+). The protein operates within one-carbon metabolism; tetrahydrofolate interconversion. Functionally, catalyzes the oxidation of 5,10-methylenetetrahydrofolate to 5,10-methenyltetrahydrofolate and then the hydrolysis of 5,10-methenyltetrahydrofolate to 10-formyltetrahydrofolate. The sequence is that of Bifunctional protein FolD from Streptococcus pyogenes serotype M28 (strain MGAS6180).